Consider the following 561-residue polypeptide: Chaperonin GroEL 1 (561 aa).

ATP is bound by residues Thr29 to Pro32, Asp86 to Thr90, Gly413, and Asp495.

The protein belongs to the chaperonin (HSP60) family. Forms a cylinder of 14 subunits composed of two heptameric rings stacked back-to-back. Interacts with the co-chaperonin GroES.

Its subcellular location is the cytoplasm. It catalyses the reaction ATP + H2O + a folded polypeptide = ADP + phosphate + an unfolded polypeptide.. Together with its co-chaperonin GroES, plays an essential role in assisting protein folding. The GroEL-GroES system forms a nano-cage that allows encapsulation of the non-native substrate proteins and provides a physical environment optimized to promote and accelerate protein folding. In Trichodesmium erythraeum (strain IMS101), this protein is Chaperonin GroEL 1.